Consider the following 142-residue polypeptide: DNA-directed RNA polymerase subunit omega (142 aa).

The interval 104–142 is disordered; it reads FNTDADVDQESTDIQDDEVENEMSNQDSEDIDDEVDNEE. Over residues 108–142 the composition is skewed to acidic residues; that stretch reads ADVDQESTDIQDDEVENEMSNQDSEDIDDEVDNEE.

It belongs to the RNA polymerase subunit omega family. As to quaternary structure, the RNAP catalytic core consists of 2 alpha, 1 beta, 1 beta' and 1 omega subunit. When a sigma factor is associated with the core the holoenzyme is formed, which can initiate transcription.

It carries out the reaction RNA(n) + a ribonucleoside 5'-triphosphate = RNA(n+1) + diphosphate. In terms of biological role, promotes RNA polymerase assembly. Latches the N- and C-terminal regions of the beta' subunit thereby facilitating its interaction with the beta and alpha subunits. This chain is DNA-directed RNA polymerase subunit omega, found in Wolbachia sp. subsp. Brugia malayi (strain TRS).